The following is a 183-amino-acid chain: MNSENLIRRYVITGSRRLSNYWWASVVFLGAIGFLFTGLSSYFGQNLLPFLQVQNITFFPQGLVMSFYGILGLLLSIYLWLTIIWNVGGGFNEFNKKAGAIRIFRWGFPGKTRCIDISYSLKEVEAIKVDFKQGVNPQRTLYLRVKGKREIPLSQIGQPLTVEEVEKQAAELAKFLQVSVEGL.

2 helical membrane-spanning segments follow: residues 23 to 43 and 64 to 84; these read WASVVFLGAIGFLFTGLSSYF and VMSFYGILGLLLSIYLWLTII.

This sequence belongs to the Ycf4 family.

It localises to the plastid. It is found in the chloroplast thylakoid membrane. Functionally, seems to be required for the assembly of the photosystem I complex. In Stigeoclonium helveticum (Green alga), this protein is Photosystem I assembly protein Ycf4.